The sequence spans 125 residues: uncharacterized protein (125 aa).

Residues 36-57 form a disordered region; sequence EAKKAKEKQDSKTKDTDKKVDQ. A helical transmembrane segment spans residues 92–112; sequence ITIFLLIVLVSAIMIGIYFGI.

It localises to the membrane. This is an uncharacterized protein from Mycoplasma pneumoniae (strain ATCC 29342 / M129 / Subtype 1) (Mycoplasmoides pneumoniae).